Here is a 360-residue protein sequence, read N- to C-terminus: Tryptophan--tRNA ligase, mitochondrial (360 aa).

A mitochondrion-targeting transit peptide spans 1 to 18 (MALHSMRKARERWSFIRA). Residues Gln-42 and 48-51 (HLGN) each bind ATP. Asp-167 contributes to the L-tryptophan binding site. Residues 179 to 181 (GED), Val-217, and 226 to 230 (KMSKS) each bind ATP.

It belongs to the class-I aminoacyl-tRNA synthetase family. In terms of tissue distribution, brain.

Its subcellular location is the mitochondrion matrix. The protein resides in the mitochondrion. The enzyme catalyses tRNA(Trp) + L-tryptophan + ATP = L-tryptophyl-tRNA(Trp) + AMP + diphosphate + H(+). Catalyzes the attachment of tryptophan to tRNA(Trp) in a two-step reaction: tryptophan is first activated by ATP to form Trp-AMP and then transferred to the acceptor end of tRNA(Trp). The chain is Tryptophan--tRNA ligase, mitochondrial (WARS2) from Homo sapiens (Human).